The primary structure comprises 65 residues: Large ribosomal subunit protein uL29 (65 aa).

This sequence belongs to the universal ribosomal protein uL29 family.

The sequence is that of Large ribosomal subunit protein uL29 from Buchnera aphidicola subsp. Cinara cedri (strain Cc).